The following is a 264-amino-acid chain: Glutamate 5-kinase (264 aa).

An ATP-binding site is contributed by K9. 3 residues coordinate substrate: S47, D132, and N144. ATP-binding positions include 164–165 and 206–212; these read SD and TGGIVTK.

It belongs to the glutamate 5-kinase family.

The protein localises to the cytoplasm. The enzyme catalyses L-glutamate + ATP = L-glutamyl 5-phosphate + ADP. The protein operates within amino-acid biosynthesis; L-proline biosynthesis; L-glutamate 5-semialdehyde from L-glutamate: step 1/2. Its function is as follows. Catalyzes the transfer of a phosphate group to glutamate to form L-glutamate 5-phosphate. The chain is Glutamate 5-kinase from Helicobacter hepaticus (strain ATCC 51449 / 3B1).